The following is a 398-amino-acid chain: MSLNSLDLPGKPEDTRVVVAMSGGVDSSVVAGILKREGYDVVGVTLQLYDHGAAVHRAGSCCAGQDIEDARRVSESLGIPHYVLDYEARFREAVIDPFANSYVSGETPIPCVSCNQTVKFADLLQTARDLGADALATGHYIRSRANGAHRALYRPVDTDRDQSYFLFATTQEQIDYLRFPLGHLPKAQVREIAEELGLTVAKKQDSQDICFVPQGKYSDIISRLKPEAANPGDIVHIDGRTLGRHDGIVHYTVGQRRGIGVATGEALYVVHLDAANARVIVGPREALETHKVFLRDVNWLGDTPIADLPKSGMEVFAKVRSTRPPRPAVLRHADGQTWVELVDGESGIAPGQACVLYSDDSNAARVFGGGFIGRSEREPQAEEMLRRLMANADKASAA.

ATP is bound by residues 20-27 and leucine 46; that span reads AMSGGVDS. The active-site Nucleophile is the cysteine 114. A disulfide bridge links cysteine 114 with cysteine 210. ATP is bound at residue glycine 138. An interaction with tRNA region spans residues 160-162; it reads RDQ. Cysteine 210 (cysteine persulfide intermediate) is an active-site residue.

This sequence belongs to the MnmA/TRMU family.

It localises to the cytoplasm. The enzyme catalyses S-sulfanyl-L-cysteinyl-[protein] + uridine(34) in tRNA + AH2 + ATP = 2-thiouridine(34) in tRNA + L-cysteinyl-[protein] + A + AMP + diphosphate + H(+). Its function is as follows. Catalyzes the 2-thiolation of uridine at the wobble position (U34) of tRNA, leading to the formation of s(2)U34. The sequence is that of tRNA-specific 2-thiouridylase MnmA from Brucella abortus (strain S19).